The chain runs to 199 residues: dTTP/UTP pyrophosphatase (199 aa).

Aspartate 79 acts as the Proton acceptor in catalysis.

Belongs to the Maf family. YhdE subfamily. A divalent metal cation serves as cofactor.

It localises to the cytoplasm. It carries out the reaction dTTP + H2O = dTMP + diphosphate + H(+). The enzyme catalyses UTP + H2O = UMP + diphosphate + H(+). Its function is as follows. Nucleoside triphosphate pyrophosphatase that hydrolyzes dTTP and UTP. May have a dual role in cell division arrest and in preventing the incorporation of modified nucleotides into cellular nucleic acids. The sequence is that of dTTP/UTP pyrophosphatase from Porphyromonas gingivalis (strain ATCC 33277 / DSM 20709 / CIP 103683 / JCM 12257 / NCTC 11834 / 2561).